Reading from the N-terminus, the 198-residue chain is Recombination protein RecR (198 aa).

Residues 58 to 73 form a C4-type zinc finger; that stretch reads CLNCGNVGTSDICDIC. In terms of domain architecture, Toprim spans 81-175; the sequence is GELCVVEDVA…RLTSLAQGVP (95 aa).

It belongs to the RecR family.

Functionally, may play a role in DNA repair. It seems to be involved in an RecBC-independent recombinational process of DNA repair. It may act with RecF and RecO. This is Recombination protein RecR from Ruegeria pomeroyi (strain ATCC 700808 / DSM 15171 / DSS-3) (Silicibacter pomeroyi).